Reading from the N-terminus, the 1707-residue chain is Latrophilin Cirl (1707 aa).

The Extracellular segment spans residues 1–767; that stretch reads MLPTILSISY…LFTMFDGNMR (767 aa). The SUEL-type lectin domain occupies 25–114; the sequence is ACEGKKLTIE…KYLEAHYQCI (90 aa). N142 carries N-linked (GlcNAc...) asparagine glycosylation. The tract at residues 176–301 is disordered; that stretch reads GLFNVPPQHT…TAASGAVVPG (126 aa). 2 stretches are compositionally biased toward polar residues: residues 185–198 and 256–265; these read TAVTHSTPSSSTTA and NATSPSNTRI. N256 is a glycosylation site (N-linked (GlcNAc...) asparagine). Low complexity predominate over residues 275–285; sequence DDGTLLTTKSS. N302, N341, N398, N655, N703, and N730 each carry an N-linked (GlcNAc...) asparagine glycan. Residues 376-400 form a disordered region; that stretch reads YDEYDDDPSSTTPAPNGGDCLHNSS. The region spanning 561–754 is the GAIN-B domain; the sequence is RSVVQKVKNI…AILMDVVDEH (194 aa). Disulfide bonds link C709–C736 and C724–C738. Residues 709-754 are GPS; sequence CVFWNYIDHAWSANGCSLESTNRTHSVCSCNHLTNFAILMDVVDEH. A helical transmembrane segment spans residues 768–788; the sequence is IFIYISIGICVVFIVIALLTL. The Cytoplasmic segment spans residues 789-801; it reads KLFNGVFVKSART. A helical transmembrane segment spans residues 802–822; it reads SIYTSIYLCLLAIELLFLLGI. The Extracellular segment spans residues 823 to 828; the sequence is EQTETS. Residues 829 to 849 form a helical membrane-spanning segment; that stretch reads IFCGFITIFLHCAILSGTAWF. At 850–875 the chain is on the cytoplasmic side; it reads CYEAFHSYSTLTSDELLLEVDQTPKV. The chain crosses the membrane as a helical span at residues 876-896; the sequence is NCYYLLSYGLSLSVVAISLVI. The Extracellular portion of the chain corresponds to 897–920; that stretch reads DPSTYTQNDYCVLMEANALFYATF. A helical transmembrane segment spans residues 921-941; it reads VIPVLVFFVAAIGYTFLSWII. Residues 942–968 are Cytoplasmic-facing; the sequence is LCRKSRTGLKTKEHTRLASVRFDIRCS. Residues 969–989 form a helical membrane-spanning segment; the sequence is FVFLLLLSAVWCSSYFYLRGA. Residues 990 to 999 are Extracellular-facing; the sequence is KMDDDTADVY. The helical transmembrane segment at 1000–1020 threads the bilayer; the sequence is GYCFICFNTLLGLYIFVFHCI. Residues 1021–1707 lie on the Cytoplasmic side of the membrane; that stretch reads QNEKIRREYR…VRCYLEPLAK (687 aa). S1156 is subject to Phosphoserine. 2 disordered regions span residues 1169–1188 and 1236–1260; these read AHKQQQQQQQQQQGPLGEGY and KPNSGQHGKKKRGAGGVPASPSGSL. Over residues 1172–1181 the composition is skewed to low complexity; that stretch reads QQQQQQQQQQ. Phosphoserine occurs at positions 1255 and 1262. The segment covering 1316–1326 has biased composition (low complexity); sequence QQLHQQQQQQL. Disordered stretches follow at residues 1316–1335, 1450–1538, 1563–1582, and 1612–1687; these read QQLHQQQQQQLSSDEEQVEQ, GGGS…SDER, APLDYGALPPGSGPQPEHNG, and GGRL…QQRH. A phosphoserine mark is found at S1327 and S1328. Positions 1456–1481 are enriched in low complexity; it reads GGSVSSRSQQQQLKKQQQQQSLAQQR. Acidic residues-rich tracts occupy residues 1489–1503 and 1513–1526; these read DDDDDEEEEEDEEAT and CDEDEEEDESDLED. Positions 1635–1650 are enriched in polar residues; that stretch reads QTPAQKRQQLQKLSPQ. Over residues 1651–1673 the composition is skewed to low complexity; that stretch reads STTSSSSHTSHSNPNPHPLQLTH. Residues 1674–1686 are compositionally biased toward basic residues; it reads PHPHQHPPHHQQR.

Belongs to the G-protein coupled receptor 2 family. LN-TM7 subfamily. Forms a heterodimer, consisting of a large extracellular region non-covalently linked to a seven-transmembrane moiety. Proteolytically cleaved into 2 subunits, an extracellular subunit and a seven-transmembrane subunit.

It localises to the cell membrane. The protein is Latrophilin Cirl of Drosophila yakuba (Fruit fly).